The primary structure comprises 239 residues: Ribonuclease PH (239 aa).

Phosphate-binding positions include Arg87 and 125-127 (GTR).

The protein belongs to the RNase PH family. As to quaternary structure, homohexameric ring arranged as a trimer of dimers.

The enzyme catalyses tRNA(n+1) + phosphate = tRNA(n) + a ribonucleoside 5'-diphosphate. Its function is as follows. Phosphorolytic 3'-5' exoribonuclease that plays an important role in tRNA 3'-end maturation. Removes nucleotide residues following the 3'-CCA terminus of tRNAs; can also add nucleotides to the ends of RNA molecules by using nucleoside diphosphates as substrates, but this may not be physiologically important. Probably plays a role in initiation of 16S rRNA degradation (leading to ribosome degradation) during starvation. In Pseudomonas paraeruginosa (strain DSM 24068 / PA7) (Pseudomonas aeruginosa (strain PA7)), this protein is Ribonuclease PH.